The chain runs to 311 residues: MALPILLDCDPGHDDAIAIVLALASPELDVKAITSSAGNQTPEKTLRNVLRMLTLLNRTDIPVAGGAVKPLMRELIIADNVHGESGLDGPALPEPTFAPQNCTAVELMAKTLRESAEPVTIVSTGPQTNVALLLNSHPELHSKIARIVIMGGAMGLGNWTPAAEFNIYVDPEAAEIVFQSGIPVVMAGLDVTHKAQIHVEDTERFRAIGNPVSTIVAELLDFFLEYHKDEKWGFVGAPLHDPCTIAWLLKPELFTTVERWVGVETQGKYTQGMTVVDYYYLTGNKPNATVIVDVDRQGFVDLLADRLKFYA.

His240 is a catalytic residue.

This sequence belongs to the IUNH family. RihA subfamily.

In terms of biological role, hydrolyzes cytidine or uridine to ribose and cytosine or uracil, respectively. This chain is Pyrimidine-specific ribonucleoside hydrolase RihA, found in Shigella flexneri serotype 5b (strain 8401).